We begin with the raw amino-acid sequence, 110 residues long: Chelonianin (110 aa).

Residue Q1 is modified to Pyrrolidone carboxylic acid. The region spanning 8 to 58 (CRLPPEQGPCKGRIPRYFYNPASRMCESFIYGGCKGNKNNFKTKAECVRAC) is the BPTI/Kunitz inhibitor domain. Intrachain disulfides connect C8/C58, C17/C41, C33/C54, C67/C92, C76/C97, C80/C93, and C86/C101. The WAP domain maps to 60-105 (PPERPGVCPKTSGPGICLHGCDSDSDCKEGQKCCFDGCGYICLTVA).

In terms of biological role, the first domain inhibits trypsin; the second one inhibitis subtilisin. This chain is Chelonianin, found in Caretta caretta (Loggerhead sea turtle).